The primary structure comprises 256 residues: Alcohol dehydrogenase (256 aa).

12 to 35 contacts NAD(+); that stretch reads FVAGLGGIGLDTSKELVKRDLKNL. Ser140 lines the substrate pocket. Catalysis depends on Tyr153, which acts as the Proton acceptor.

Belongs to the short-chain dehydrogenases/reductases (SDR) family. In terms of assembly, homodimer.

It catalyses the reaction a primary alcohol + NAD(+) = an aldehyde + NADH + H(+). It carries out the reaction a secondary alcohol + NAD(+) = a ketone + NADH + H(+). This chain is Alcohol dehydrogenase (Adh), found in Drosophila orena (Fruit fly).